The primary structure comprises 293 residues: MTRRRPERRRDLLGLLGETPVDLSQANDIRALPVNELKVGSTQPRRSFDLERLSELAESIRAHGVLQPLLVRSVDGQYEIVAGERRWRAAQLAGLAEVPVVVRQLSNEQARAAALIENLQRDNLNVIDEVDGKLELIALTLGLEREEARKRLMQLLRAVPGDEHEQLDQVFRSMGETWRTFAKNKLRILNWPQPVLEALRAGLPLTLGSVVASAPPERQAELLKLAQNGASRSQLLQALQTPSQTSAVTPEHFAKVLSSKRFLSGLDTPTREALDRWLARMPERVRQAIDEQS.

Belongs to the ParB family.

In terms of biological role, involved in chromosome partition. Localize to both poles of the predivisional cell following completion of DNA replication. Binds to the DNA origin of replication. The polypeptide is Probable chromosome 2-partitioning protein ParB (parB2) (Deinococcus radiodurans (strain ATCC 13939 / DSM 20539 / JCM 16871 / CCUG 27074 / LMG 4051 / NBRC 15346 / NCIMB 9279 / VKM B-1422 / R1)).